Here is a 242-residue protein sequence, read N- to C-terminus: tRNA (guanine-N(7)-)-methyltransferase (242 aa).

S-adenosyl-L-methionine contacts are provided by E66, E91, D118, and D141. D141 is a catalytic residue. Substrate-binding positions include K145, D177, and 214 to 217 (TKFE).

This sequence belongs to the class I-like SAM-binding methyltransferase superfamily. TrmB family. As to quaternary structure, monomer.

The catalysed reaction is guanosine(46) in tRNA + S-adenosyl-L-methionine = N(7)-methylguanosine(46) in tRNA + S-adenosyl-L-homocysteine. Its pathway is tRNA modification; N(7)-methylguanine-tRNA biosynthesis. Functionally, catalyzes the formation of N(7)-methylguanine at position 46 (m7G46) in tRNA. The polypeptide is tRNA (guanine-N(7)-)-methyltransferase (Buchnera aphidicola subsp. Baizongia pistaciae (strain Bp)).